The sequence spans 847 residues: uncharacterized protein (847 aa).

Residues 116–126 (TGSSELTTSKT) are compositionally biased toward polar residues. Disordered stretches follow at residues 116 to 153 (TGSS…TPIE), 208 to 245 (LKNF…RLSP), and 361 to 392 (DLEK…SNVI). The segment covering 128–145 (IDVDTKEQENRLKQKAEA) has biased composition (basic and acidic residues). Over residues 368–378 (SSSASLSTNKL) the composition is skewed to polar residues.

This is an uncharacterized protein from Caenorhabditis elegans.